Here is a 371-residue protein sequence, read N- to C-terminus: tRNA 2-selenouridine synthase (371 aa).

The Rhodanese domain maps to 14-137 (FLDDVPLIDL…MRRFLIDTLD (124 aa)). The active-site S-selanylcysteine intermediate is Cys97.

The protein belongs to the SelU family. As to quaternary structure, monomer.

It catalyses the reaction 5-methylaminomethyl-2-thiouridine(34) in tRNA + selenophosphate + (2E)-geranyl diphosphate + H2O + H(+) = 5-methylaminomethyl-2-selenouridine(34) in tRNA + (2E)-thiogeraniol + phosphate + diphosphate. It carries out the reaction 5-methylaminomethyl-2-thiouridine(34) in tRNA + (2E)-geranyl diphosphate = 5-methylaminomethyl-S-(2E)-geranyl-thiouridine(34) in tRNA + diphosphate. The enzyme catalyses 5-methylaminomethyl-S-(2E)-geranyl-thiouridine(34) in tRNA + selenophosphate + H(+) = 5-methylaminomethyl-2-(Se-phospho)selenouridine(34) in tRNA + (2E)-thiogeraniol. The catalysed reaction is 5-methylaminomethyl-2-(Se-phospho)selenouridine(34) in tRNA + H2O = 5-methylaminomethyl-2-selenouridine(34) in tRNA + phosphate. Involved in the post-transcriptional modification of the uridine at the wobble position (U34) of tRNA(Lys), tRNA(Glu) and tRNA(Gln). Catalyzes the conversion of 2-thiouridine (S2U-RNA) to 2-selenouridine (Se2U-RNA). Acts in a two-step process involving geranylation of 2-thiouridine (S2U) to S-geranyl-2-thiouridine (geS2U) and subsequent selenation of the latter derivative to 2-selenouridine (Se2U) in the tRNA chain. The sequence is that of tRNA 2-selenouridine synthase from Aeromonas salmonicida (strain A449).